The following is a 585-amino-acid chain: Probable glucomannan 4-beta-mannosyltransferase 7 (585 aa).

Residues 87-107 (VIAPTLQVAVWVCMVMSVMLV) traverse the membrane as a helical segment. Residue D188 is part of the active site. D247 and D249 together coordinate substrate. The active site involves D341. A run of 4 helical transmembrane segments spans residues 420–440 (VVAP…SVMI), 443–463 (LFIP…ITTI), 534–554 (LPEI…LIFH), and 563–583 (LYLQ…NFAC).

Belongs to the glycosyltransferase 2 family. Plant cellulose synthase-like A subfamily.

The protein resides in the golgi apparatus membrane. It catalyses the reaction GDP-mannose + (glucomannan)n = GDP + (glucomannan)n+1.. Probable mannan synthase which consists of a 4-beta-mannosyltransferase activity on mannan using GDP-mannose. The beta-1,4-mannan product is the backbone for galactomannan synthesis by galactomannan galactosyltransferase. Galactomannan is a noncellulosic polysaccharides of plant cell wall. The chain is Probable glucomannan 4-beta-mannosyltransferase 7 from Oryza sativa subsp. japonica (Rice).